A 163-amino-acid chain; its full sequence is ATP synthase subunit b (163 aa).

Residues 9-29 (GLLIAQLINVVFVVWLLTTFL) traverse the membrane as a helical segment.

Belongs to the ATPase B chain family. F-type ATPases have 2 components, F(1) - the catalytic core - and F(0) - the membrane proton channel. F(1) has five subunits: alpha(3), beta(3), gamma(1), delta(1), epsilon(1). F(0) has four main subunits: a(1), b(2) and c(10-14). The alpha and beta chains form an alternating ring which encloses part of the gamma chain. F(1) is attached to F(0) by a central stalk formed by the gamma and epsilon chains, while a peripheral stalk is formed by the delta and b chains.

The protein localises to the cell membrane. F(1)F(0) ATP synthase produces ATP from ADP in the presence of a proton or sodium gradient. F-type ATPases consist of two structural domains, F(1) containing the extramembraneous catalytic core and F(0) containing the membrane proton channel, linked together by a central stalk and a peripheral stalk. During catalysis, ATP synthesis in the catalytic domain of F(1) is coupled via a rotary mechanism of the central stalk subunits to proton translocation. Functionally, component of the F(0) channel, it forms part of the peripheral stalk, linking F(1) to F(0). The polypeptide is ATP synthase subunit b (Roseiflexus castenholzii (strain DSM 13941 / HLO8)).